The primary structure comprises 266 residues: Outer membrane protein OmpK (266 aa).

Residues 1-20 (MRKSLLALSLLAATSAPVLA) form the signal peptide.

This sequence belongs to the nucleoside-specific channel-forming outer membrane porin (Tsx) (TC 1.B.10) family.

Its subcellular location is the cell outer membrane. Its function is as follows. Serves as receptor for a broad-host-range vibriophage, KVP40. The polypeptide is Outer membrane protein OmpK (ompK) (Vibrio parahaemolyticus serotype O3:K6 (strain RIMD 2210633)).